We begin with the raw amino-acid sequence, 418 residues long: AP-3 complex subunit mu-2 (418 aa).

The MHD domain occupies 176 to 417 (NNEAYFDVVE…MTKAGKFQVR (242 aa)).

Belongs to the adaptor complexes medium subunit family. As to quaternary structure, adaptor protein complex 3 (AP-3) is a heterotetramer composed of two large adaptins (delta-type subunit AP3D1 and beta-type subunit AP3B1 or AP3B2), a medium adaptin (mu-type subunit AP3M1 or AP3M2) and a small adaptin (sigma-type subunit APS1 or AP3S2). AP-3 associates with the BLOC-1 complex.

It localises to the golgi apparatus. Its subcellular location is the cytoplasmic vesicle membrane. Functionally, component of the adaptor complexes which link clathrin to receptors in coated vesicles. Clathrin-associated protein complexes are believed to interact with the cytoplasmic tails of membrane proteins, leading to their selection and concentration. Ap47 is a subunit of the plasma membrane adaptor. In concert with the BLOC-1 complex, AP-3 is required to target cargos into vesicles assembled at cell bodies for delivery into neurites and nerve terminals. This chain is AP-3 complex subunit mu-2 (Ap3m2), found in Rattus norvegicus (Rat).